We begin with the raw amino-acid sequence, 635 residues long: Threonine--tRNA ligase (635 aa).

The TGS domain maps to 1 to 61; it reads MVSIRLPDGS…DRDASLAIVT (61 aa). A catalytic region spans residues 242–533; it reads DHRKLGKQLD…LIEHHAGAMP (292 aa). Residues Cys333, His384, and His510 each contribute to the Zn(2+) site.

Belongs to the class-II aminoacyl-tRNA synthetase family. Homodimer. Zn(2+) serves as cofactor.

It localises to the cytoplasm. The catalysed reaction is tRNA(Thr) + L-threonine + ATP = L-threonyl-tRNA(Thr) + AMP + diphosphate + H(+). Catalyzes the attachment of threonine to tRNA(Thr) in a two-step reaction: L-threonine is first activated by ATP to form Thr-AMP and then transferred to the acceptor end of tRNA(Thr). Also edits incorrectly charged L-seryl-tRNA(Thr). In Burkholderia orbicola (strain MC0-3), this protein is Threonine--tRNA ligase.